We begin with the raw amino-acid sequence, 370 residues long: Nematocyst expressed protein 4 (370 aa).

Residues 1–19 (MAWTLVLLVLLGTSSCLDA) form the signal peptide. Positions 34 to 55 (SGSGSGEEGSSGSGSAPEPVRD) are disordered. Over residues 36-45 (SGSGEEGSSG) the composition is skewed to gly residues. 3 consecutive ShKT domains span residues 70-102 (CLDK…CRFC), 113-149 (CTDA…CKLC), and 155-190 (GKKF…CEVH). Cystine bridges form between Cys-70/Cys-102, Cys-77/Cys-95, Cys-84/Cys-99, Cys-113/Cys-149, Cys-121/Cys-142, Cys-131/Cys-146, Cys-164/Cys-183, and Cys-173/Cys-187. The span at 306 to 340 (PYPPPPPPYPEQVPPPPPPPPPPPPPPPYPYPYPY) shows a compositional bias: pro residues. A disordered region spans residues 306–370 (PYPPPPPPYP…HHKENHSKKS (65 aa)). Residues 349–370 (HKSKKHAKHHEKHHKENHSKKS) show a composition bias toward basic residues.

Belongs to the NEP3 family. In terms of tissue distribution, nematocytes. In late planulae, transcripts are found throughout the ectoderm in nematocytes, with high concentration of expressing cells in the oral pole. In primary polyps, is expressed in nematocytes in the body wall and physa ectoderm and in the upper and lower pharynx.

It is found in the nematocyst. It localises to the secreted. This Nematostella vectensis (Starlet sea anemone) protein is Nematocyst expressed protein 4.